Reading from the N-terminus, the 31-residue chain is Cycloviolacin-O19 (31 aa).

The cyclopeptide (Gly-Asp) cross-link spans G1–D31. 3 disulfides stabilise this stretch: C5–C21, C9–C23, and C14–C28.

In terms of processing, this is a cyclic peptide. As to expression, expressed in petioles and runners but not in leaves, petals and roots (at protein level).

Its function is as follows. Probably participates in a plant defense mechanism. In Viola odorata (Sweet violet), this protein is Cycloviolacin-O19.